The following is a 396-amino-acid chain: Ribosomal RNA large subunit methyltransferase I (396 aa).

The 80-residue stretch at 2-81 folds into the PUA domain; sequence SVRLVLAKGR…ESIDIAFFSR (80 aa).

This sequence belongs to the methyltransferase superfamily. RlmI family.

It localises to the cytoplasm. It carries out the reaction cytidine(1962) in 23S rRNA + S-adenosyl-L-methionine = 5-methylcytidine(1962) in 23S rRNA + S-adenosyl-L-homocysteine + H(+). Functionally, specifically methylates the cytosine at position 1962 (m5C1962) of 23S rRNA. The polypeptide is Ribosomal RNA large subunit methyltransferase I (Shigella boydii serotype 18 (strain CDC 3083-94 / BS512)).